The chain runs to 225 residues: Putative N-acetylmannosamine-6-phosphate 2-epimerase (225 aa).

Belongs to the NanE family.

The enzyme catalyses an N-acyl-D-glucosamine 6-phosphate = an N-acyl-D-mannosamine 6-phosphate. The protein operates within amino-sugar metabolism; N-acetylneuraminate degradation; D-fructose 6-phosphate from N-acetylneuraminate: step 3/5. Functionally, converts N-acetylmannosamine-6-phosphate (ManNAc-6-P) to N-acetylglucosamine-6-phosphate (GlcNAc-6-P). The polypeptide is Putative N-acetylmannosamine-6-phosphate 2-epimerase (Vibrio vulnificus (strain CMCP6)).